We begin with the raw amino-acid sequence, 159 residues long: Protein Smg homolog (159 aa).

This sequence belongs to the Smg family.

This is Protein Smg homolog from Dichelobacter nodosus (strain VCS1703A).